The sequence spans 564 residues: Potassium-transporting ATPase potassium-binding subunit (564 aa).

A run of 10 helical transmembrane segments spans residues 4–24 (HEIL…PFLG), 67–87 (TLAL…ILML), 135–155 (VGLT…LVAL), 179–199 (LYVL…QGVP), 258–278 (FEVA…GHYV), 286–306 (AILG…LWAE), 376–396 (IFGG…IAVF), 420–440 (LLVF…AIAA), 487–507 (LMIG…ILAI), and 528–548 (GPLF…LTFL).

Belongs to the KdpA family. The system is composed of three essential subunits: KdpA, KdpB and KdpC.

It localises to the cell inner membrane. Its function is as follows. Part of the high-affinity ATP-driven potassium transport (or Kdp) system, which catalyzes the hydrolysis of ATP coupled with the electrogenic transport of potassium into the cytoplasm. This subunit binds the periplasmic potassium ions and delivers the ions to the membrane domain of KdpB through an intramembrane tunnel. In Pseudomonas aeruginosa (strain ATCC 15692 / DSM 22644 / CIP 104116 / JCM 14847 / LMG 12228 / 1C / PRS 101 / PAO1), this protein is Potassium-transporting ATPase potassium-binding subunit.